The primary structure comprises 379 residues: Anomalous homeobox protein (379 aa).

Positions 135–196 form a DNA-binding region, homeobox; sequence PEGLKSRNFP…NYRRRQRALP (62 aa). The interval 195–283 is disordered; the sequence is LPQHMKPAQQ…SKPLDVSGHP (89 aa). A compositionally biased stretch (basic and acidic residues) spans 237–246; sequence QWSEEREEKG.

Its subcellular location is the nucleus. The sequence is that of Anomalous homeobox protein (ANHX) from Homo sapiens (Human).